The chain runs to 80 residues: Acyl carrier protein (80 aa).

The Carrier domain maps to 4–79; it reads QEIFEKVKAV…DAVEYIKAKL (76 aa). Ser-39 carries the O-(pantetheine 4'-phosphoryl)serine modification.

The protein belongs to the acyl carrier protein (ACP) family. Post-translationally, 4'-phosphopantetheine is transferred from CoA to a specific serine of apo-ACP by AcpS. This modification is essential for activity because fatty acids are bound in thioester linkage to the sulfhydryl of the prosthetic group.

It is found in the cytoplasm. It participates in lipid metabolism; fatty acid biosynthesis. Carrier of the growing fatty acid chain in fatty acid biosynthesis. The sequence is that of Acyl carrier protein from Thermus thermophilus (strain ATCC BAA-163 / DSM 7039 / HB27).